A 436-amino-acid polypeptide reads, in one-letter code: Serine hydroxymethyltransferase (436 aa).

(6S)-5,6,7,8-tetrahydrofolate-binding positions include leucine 133 and glycine 137–leucine 139. Residue lysine 242 is modified to N6-(pyridoxal phosphate)lysine. Serine 366–phenylalanine 368 is a binding site for (6S)-5,6,7,8-tetrahydrofolate.

This sequence belongs to the SHMT family. In terms of assembly, homodimer. Pyridoxal 5'-phosphate is required as a cofactor.

The protein resides in the cytoplasm. It carries out the reaction (6R)-5,10-methylene-5,6,7,8-tetrahydrofolate + glycine + H2O = (6S)-5,6,7,8-tetrahydrofolate + L-serine. It functions in the pathway one-carbon metabolism; tetrahydrofolate interconversion. The protein operates within amino-acid biosynthesis; glycine biosynthesis; glycine from L-serine: step 1/1. Its function is as follows. Catalyzes the reversible interconversion of serine and glycine with tetrahydrofolate (THF) serving as the one-carbon carrier. This reaction serves as the major source of one-carbon groups required for the biosynthesis of purines, thymidylate, methionine, and other important biomolecules. Also exhibits THF-independent aldolase activity toward beta-hydroxyamino acids, producing glycine and aldehydes, via a retro-aldol mechanism. The polypeptide is Serine hydroxymethyltransferase (Novosphingobium aromaticivorans (strain ATCC 700278 / DSM 12444 / CCUG 56034 / CIP 105152 / NBRC 16084 / F199)).